We begin with the raw amino-acid sequence, 442 residues long: Trigger factor (442 aa).

The PPIase FKBP-type domain occupies 162–247 (GDRMTFDFEG…VKAIESRELP (86 aa)).

The protein belongs to the FKBP-type PPIase family. Tig subfamily.

It is found in the cytoplasm. It catalyses the reaction [protein]-peptidylproline (omega=180) = [protein]-peptidylproline (omega=0). Involved in protein export. Acts as a chaperone by maintaining the newly synthesized protein in an open conformation. Functions as a peptidyl-prolyl cis-trans isomerase. This is Trigger factor from Magnetococcus marinus (strain ATCC BAA-1437 / JCM 17883 / MC-1).